The sequence spans 446 residues: Radical S-adenosyl methionine domain-containing protein 1, mitochondrial (446 aa).

One can recognise a Radical SAM core domain in the interval 15-277 (KGYNKLKDLP…VCEAEAMGFQ (263 aa)). Positions 34, 38, and 41 each coordinate [4Fe-4S] cluster. Residues glycine 94, 95–96 (GT), glutamate 130, glutamine 159, arginine 171, and aspartate 195 each bind S-adenosyl-L-methionine.

It belongs to the anaerobic coproporphyrinogen-III oxidase family. HemW subfamily.

It localises to the mitochondrion. Its function is as follows. May be a heme chaperone, appears to bind heme. Homologous bacterial proteins do not have oxygen-independent coproporphyrinogen-III oxidase activity. Binds 1 [4Fe-4S] cluster. The cluster is coordinated with 3 cysteines and an exchangeable S-adenosyl-L-methionine. The protein is Radical S-adenosyl methionine domain-containing protein 1, mitochondrial (rsad1) of Dictyostelium discoideum (Social amoeba).